A 371-amino-acid chain; its full sequence is uncharacterized protein (371 aa).

Positions 339-371 are disordered; that stretch reads KVTHEDLVKNRPRSPVRPPIPATAKTPDLPERH.

This is an uncharacterized protein from Escherichia coli (strain K12).